The following is a 268-amino-acid chain: Xyloglucan endotransglucosylase protein 7 (268 aa).

One can recognise a GH16 domain in the interval 1–196 (MNAEGGNLHR…WTKAPFTASY (196 aa)). The active-site Nucleophile is the Glu-82. Glu-86 (proton donor) is an active-site residue. Residue Glu-86 participates in xyloglucan binding. Residue Asn-90 is glycosylated (N-linked (GlcNAc...) asparagine). Xyloglucan is bound by residues 99–101 (HTN), 109–111 (NRE), 175–176 (DW), and Gly-180. Intrachain disulfides connect Cys-204/Cys-213 and Cys-251/Cys-265. Xyloglucan is bound at residue Arg-256.

It belongs to the glycosyl hydrolase 16 family. XTH group 2 subfamily. Contains at least one intrachain disulfide bond essential for its enzymatic activity. As to expression, expressed at a very high level in flowers and stems (picked at anthesis), and at a lower level in ripe leaves and fruits.

It is found in the cytoplasm. The enzyme catalyses breaks a beta-(1-&gt;4) bond in the backbone of a xyloglucan and transfers the xyloglucanyl segment on to O-4 of the non-reducing terminal glucose residue of an acceptor, which can be a xyloglucan or an oligosaccharide of xyloglucan.. Catalyzes xyloglucan endotransglycosylation (XET). Cleaves and religates xyloglucan polymers. Does not catalyze xyloglucan endohydrolysis (XEH). Probably involved in cell wall assembly and synthesis in fast growing tissues and in the maintenance of firmness in mature fruits. This Diospyros kaki (Kaki persimmon) protein is Xyloglucan endotransglucosylase protein 7.